The following is a 213-amino-acid chain: Serine acetyltransferase (213 aa).

It belongs to the transferase hexapeptide repeat family.

The protein resides in the cytoplasm. The catalysed reaction is L-serine + acetyl-CoA = O-acetyl-L-serine + CoA. It functions in the pathway amino-acid biosynthesis; L-cysteine biosynthesis; L-cysteine from L-serine: step 1/2. The polypeptide is Serine acetyltransferase (cysE) (Staphylococcus aureus (strain COL)).